The chain runs to 491 residues: Ketol-acid reductoisomerase (NADP(+)) (491 aa).

One can recognise a KARI N-terminal Rossmann domain in the interval A15 to S208. Residues C45–Q48, R68, R76, S78, and D108–Q110 contribute to the NADP(+) site. Residue H132 is part of the active site. Residue G158 participates in NADP(+) binding. 2 KARI C-terminal knotted domains span residues S209 to Q344 and Y345 to M484. D217, E221, E389, and E393 together coordinate Mg(2+). S414 contacts substrate.

The protein belongs to the ketol-acid reductoisomerase family. Mg(2+) is required as a cofactor.

It carries out the reaction (2R)-2,3-dihydroxy-3-methylbutanoate + NADP(+) = (2S)-2-acetolactate + NADPH + H(+). The enzyme catalyses (2R,3R)-2,3-dihydroxy-3-methylpentanoate + NADP(+) = (S)-2-ethyl-2-hydroxy-3-oxobutanoate + NADPH + H(+). It participates in amino-acid biosynthesis; L-isoleucine biosynthesis; L-isoleucine from 2-oxobutanoate: step 2/4. Its pathway is amino-acid biosynthesis; L-valine biosynthesis; L-valine from pyruvate: step 2/4. Functionally, involved in the biosynthesis of branched-chain amino acids (BCAA). Catalyzes an alkyl-migration followed by a ketol-acid reduction of (S)-2-acetolactate (S2AL) to yield (R)-2,3-dihydroxy-isovalerate. In the isomerase reaction, S2AL is rearranged via a Mg-dependent methyl migration to produce 3-hydroxy-3-methyl-2-ketobutyrate (HMKB). In the reductase reaction, this 2-ketoacid undergoes a metal-dependent reduction by NADPH to yield (R)-2,3-dihydroxy-isovalerate. The protein is Ketol-acid reductoisomerase (NADP(+)) of Escherichia coli O157:H7.